Consider the following 594-residue polypeptide: Elongation factor 4 (594 aa).

The region spanning 2–184 is the tr-type G domain; sequence KNIRNFSIIA…TIVAKVPAPE (183 aa). Residues 14-19 and 131-134 each bind GTP; these read DHGKST and NKID.

It belongs to the TRAFAC class translation factor GTPase superfamily. Classic translation factor GTPase family. LepA subfamily.

Its subcellular location is the cell inner membrane. The enzyme catalyses GTP + H2O = GDP + phosphate + H(+). Required for accurate and efficient protein synthesis under certain stress conditions. May act as a fidelity factor of the translation reaction, by catalyzing a one-codon backward translocation of tRNAs on improperly translocated ribosomes. Back-translocation proceeds from a post-translocation (POST) complex to a pre-translocation (PRE) complex, thus giving elongation factor G a second chance to translocate the tRNAs correctly. Binds to ribosomes in a GTP-dependent manner. In Francisella tularensis subsp. novicida (strain U112), this protein is Elongation factor 4.